Here is a 331-residue protein sequence, read N- to C-terminus: Holliday junction branch migration complex subunit RuvB (331 aa).

The tract at residues 1 to 186 (MAKTMMQDRL…FGIVQRLEFY (186 aa)) is large ATPase domain (RuvB-L). ATP-binding positions include I25, R26, G67, K70, T71, T72, 133 to 135 (EDF), R176, Y186, and R223. Mg(2+) is bound at residue T71. Positions 187–257 (NIADLTTIVS…IAGSALDMLA (71 aa)) are small ATPAse domain (RuvB-S). A head domain (RuvB-H) region spans residues 260–331 (RRGLDHLDRR…LTQMAIDQMV (72 aa)). DNA contacts are provided by R296, R315, and R320.

Belongs to the RuvB family. As to quaternary structure, homohexamer. Forms an RuvA(8)-RuvB(12)-Holliday junction (HJ) complex. HJ DNA is sandwiched between 2 RuvA tetramers; dsDNA enters through RuvA and exits via RuvB. An RuvB hexamer assembles on each DNA strand where it exits the tetramer. Each RuvB hexamer is contacted by two RuvA subunits (via domain III) on 2 adjacent RuvB subunits; this complex drives branch migration. In the full resolvosome a probable DNA-RuvA(4)-RuvB(12)-RuvC(2) complex forms which resolves the HJ.

The protein resides in the cytoplasm. The enzyme catalyses ATP + H2O = ADP + phosphate + H(+). In terms of biological role, the RuvA-RuvB-RuvC complex processes Holliday junction (HJ) DNA during genetic recombination and DNA repair, while the RuvA-RuvB complex plays an important role in the rescue of blocked DNA replication forks via replication fork reversal (RFR). RuvA specifically binds to HJ cruciform DNA, conferring on it an open structure. The RuvB hexamer acts as an ATP-dependent pump, pulling dsDNA into and through the RuvAB complex. RuvB forms 2 homohexamers on either side of HJ DNA bound by 1 or 2 RuvA tetramers; 4 subunits per hexamer contact DNA at a time. Coordinated motions by a converter formed by DNA-disengaged RuvB subunits stimulates ATP hydrolysis and nucleotide exchange. Immobilization of the converter enables RuvB to convert the ATP-contained energy into a lever motion, pulling 2 nucleotides of DNA out of the RuvA tetramer per ATP hydrolyzed, thus driving DNA branch migration. The RuvB motors rotate together with the DNA substrate, which together with the progressing nucleotide cycle form the mechanistic basis for DNA recombination by continuous HJ branch migration. Branch migration allows RuvC to scan DNA until it finds its consensus sequence, where it cleaves and resolves cruciform DNA. The chain is Holliday junction branch migration complex subunit RuvB from Psychrobacter arcticus (strain DSM 17307 / VKM B-2377 / 273-4).